We begin with the raw amino-acid sequence, 35 residues long: Sperm protamine alpha isoform 1 (35 aa).

The segment at 1–35 is disordered; sequence MPRRRRRASRPVRRRRRARRSTAVRRRRRVVRRRR. A phosphoserine mark is found at serine 9 and serine 21.

Post-translationally, phosphorylated in immature sperm. Dephosphorylated in mature sperm allowing a stronger interaction with DNA. In terms of tissue distribution, gonads.

Its subcellular location is the nucleus. The protein resides in the chromosome. In terms of biological role, protamines substitute for histones in the chromatin of sperm during the haploid phase of spermatogenesis. They compact sperm DNA into a highly condensed, stable and inactive complex. In Scomber scombrus (Atlantic mackerel), this protein is Sperm protamine alpha isoform 1.